The chain runs to 492 residues: Trk system potassium uptake protein TrkI (492 aa).

Transmembrane regions (helical) follow at residues 20–40 (VLAVLWLVLAIFMAIPLLVLI), 47–67 (ALAFGLSIAIVLAAATLSWIV), 81–101 (FVLTTLSWVTISSFASLPLVL), 143–163 (IMQWLGGIGIIVMGIAILPFL), 196–216 (IYCGFTLLAAMAYYLGGMSPL), 246–266 (QLLWMGSLFMLCGALPFVLYI), 282–302 (VQGLLLLLLLVILALTIWRVS), 334–354 (AWGATAYVAFFYLTFVGGCSG), 403–423 (VVAFSFFFFLTVAGLALGLSL), and 465–485 (WLLCVGMLMGRLEILTVLVLL).

It belongs to the TrkH potassium transport family.

The protein resides in the cell inner membrane. In terms of biological role, medium-affinity potassium transport system. Probably interacts with Trk system potassium uptake protein TrkA. Main K(+) transporter in osmotically adapted cells. In Halomonas elongata (strain ATCC 33173 / DSM 2581 / NBRC 15536 / NCIMB 2198 / 1H9), this protein is Trk system potassium uptake protein TrkI (trkI).